The sequence spans 1637 residues: Glutamate rich 3 (1637 aa).

6 disordered regions span residues 145–192 (PLTL…GSLL), 408–453 (PSST…KESC), 478–814 (EWKG…QDAG), 1111–1194 (VGTS…SPRE), 1238–1445 (IEKV…SGER), and 1457–1637 (KAEN…RETA). Residues 169 to 185 (LLSSRQTRNGSKITSGS) show a composition bias toward polar residues. Composition is skewed to basic and acidic residues over residues 416–426 (EKITEKKEEPP), 443–452 (KRNEMERKES), and 478–487 (EWKGKSGRDV). Residues 500-523 (YEEDFEVDDEKQDEKVDEDEDQAD) show a composition bias toward acidic residues. The span at 534 to 557 (TESEKDNRNPEKKIETSSEKAHDS) shows a compositional bias: basic and acidic residues. Over residues 558–572 (ENEDTGCSDSEEDDR) the composition is skewed to acidic residues. Composition is skewed to low complexity over residues 579 to 590 (SSISSRSHPYSS) and 608 to 617 (EEGSSRSSSS). Basic and acidic residues-rich tracts occupy residues 619-638 (DLRE…KYLE), 677-693 (ESEH…EVRA), 769-802 (QEMH…ESGM), 1115-1130 (EVKE…KTDG), 1264-1307 (LKTE…KDVE), 1319-1329 (KLLEDPPKERA), 1342-1357 (SPKE…KGGE), and 1402-1412 (RCEEWAAKELD). Residues 1476–1487 (VTGSLTGQNWNM) show a composition bias toward polar residues. Composition is skewed to basic and acidic residues over residues 1550–1568 (AEER…KVAV), 1589–1599 (AQDREGGETKA), and 1614–1637 (GKDE…RETA).

Its subcellular location is the cell projection. The protein resides in the cilium. It localises to the cytoplasm. Its function is as follows. Component of the primary cilium that controls cilium formation and length. May function within retrograde intraflagellar transport (IFT)-associated pathways to remove signaling proteins from primary cilia. Also involved in neuronal vesicle biogenesis and neurotransmitter vesicular function. The sequence is that of Glutamate rich 3 from Mus musculus (Mouse).